The primary structure comprises 359 residues: Histamine H2 receptor (359 aa).

At 1 to 22 the chain is on the extracellular side; the sequence is MISNGTGSSFCLDSPPCRITVS. N-linked (GlcNAc...) asparagine glycosylation occurs at N4. The helical transmembrane segment at 23–44 threads the bilayer; sequence VVLTVLILITIAGNVVVCLAVG. Over 45–57 the chain is Cytoplasmic; it reads LNRRLRSLTNCFI. The chain crosses the membrane as a helical span at residues 58-81; it reads VSLAITDLLLGLLVLPFSAFYQLS. Over 82-92 the chain is Extracellular; sequence CRWSFGKVFCN. A disulfide bridge connects residues C91 and C174. Residues 93–114 form a helical membrane-spanning segment; that stretch reads IYTSLDVMLCTASILNLFMISL. Residues 115 to 134 are Cytoplasmic-facing; the sequence is DRYCAVTDPLRYPVLITPVR. The helical transmembrane segment at 135–159 threads the bilayer; sequence VAVSLVLIWVISITLSFLSIHLGWN. Residues 160-180 lie on the Extracellular side of the membrane; sequence SRNETSSFNHTIPKCKVQVNL. Residues 181–204 traverse the membrane as a helical segment; sequence VYGLVDGLVTFYLPLLVMCITYYR. Topologically, residues 205 to 234 are cytoplasmic; the sequence is IFKIARDQAKRIHHMGSWKAATIGEHKATV. The chain crosses the membrane as a helical span at residues 235–258; the sequence is TLAAVMGAFIICWFPYFTVFVYRG. Topologically, residues 259–267 are extracellular; the sequence is LKGDDAINE. The chain crosses the membrane as a helical span at residues 268–289; the sequence is AFEAVVLWLGYANSALNPILYA. Residues 290 to 359 are Cytoplasmic-facing; sequence TLNRDFRTAY…VTAPRGATDR (70 aa). C305 carries S-palmitoyl cysteine lipidation. Positions 310-327 are enriched in polar residues; it reads HNAQETSLRSNSSQLARN. Residues 310–359 form a disordered region; the sequence is HNAQETSLRSNSSQLARNQSREPMRQEEKPLKLQVWSGTEVTAPRGATDR. The segment covering 328-340 has biased composition (basic and acidic residues); sequence QSREPMRQEEKPL.

The protein belongs to the G-protein coupled receptor 1 family. As to expression, gastric fundus and, to a lesser extent, in brain.

It localises to the cell membrane. The H2 subclass of histamine receptors mediates gastric acid secretion. The activity of this receptor is mediated by G proteins which activate adenylyl cyclase. The chain is Histamine H2 receptor (HRH2) from Canis lupus familiaris (Dog).